The chain runs to 1578 residues: Chitinase ChiA (1578 aa).

The first 19 residues, 1 to 19, serve as a signal peptide directing secretion; sequence MKHYYRLLFLLLFPLLASA. The GH18 1 domain maps to 25–466; it reads KKVVGYYAQW…NQVDTSFGSV (442 aa). The interval 26–446 is GH18N; sequence KVVGYYAQWS…GGMIWELSQD (421 aa). Residues 92–93 and 119–122 each bind chitin; these read DA and GGWT. Catalysis depends on Glu-162, which acts as the Proton donor. Chitin contacts are provided by residues Tyr-163, 249–252, and Trp-441; that span reads FGYD. In terms of domain architecture, CNA-B spans 485 to 536; that stretch reads TDVTVELRNASNAVIQTVVSANGNFAFNNLTSGQNYSLTALKATYTFTPVTL. A GH18C region spans residues 1142-1462; that stretch reads KIILGYAHSW…GLMTWSVNWD (321 aa). The region spanning 1142–1483 is the GH18 2 domain; the sequence is KIILGYAHSW…KAYAAYFASQ (342 aa). Glu-1264 acts as the Proton donor in catalysis. The interval 1473-1578 is CTD; it reads SKAYAAYFAS…KSFKVMNFLN (106 aa).

This sequence belongs to the glycosyl hydrolase 18 family. Chitinase class II subfamily.

Its subcellular location is the secreted. It catalyses the reaction Random endo-hydrolysis of N-acetyl-beta-D-glucosaminide (1-&gt;4)-beta-linkages in chitin and chitodextrins.. Functionally, major extracellular chitinase, which is essential for chitin utilization. This is Chitinase ChiA (chiA) from Flavobacterium johnsoniae (strain ATCC 17061 / DSM 2064 / JCM 8514 / BCRC 14874 / CCUG 350202 / NBRC 14942 / NCIMB 11054 / UW101) (Cytophaga johnsonae).